Reading from the N-terminus, the 500-residue chain is Aspartyl/glutamyl-tRNA(Asn/Gln) amidotransferase subunit B (500 aa).

It belongs to the GatB/GatE family. GatB subfamily. In terms of assembly, heterotrimer of A, B and C subunits.

The catalysed reaction is L-glutamyl-tRNA(Gln) + L-glutamine + ATP + H2O = L-glutaminyl-tRNA(Gln) + L-glutamate + ADP + phosphate + H(+). The enzyme catalyses L-aspartyl-tRNA(Asn) + L-glutamine + ATP + H2O = L-asparaginyl-tRNA(Asn) + L-glutamate + ADP + phosphate + 2 H(+). Functionally, allows the formation of correctly charged Asn-tRNA(Asn) or Gln-tRNA(Gln) through the transamidation of misacylated Asp-tRNA(Asn) or Glu-tRNA(Gln) in organisms which lack either or both of asparaginyl-tRNA or glutaminyl-tRNA synthetases. The reaction takes place in the presence of glutamine and ATP through an activated phospho-Asp-tRNA(Asn) or phospho-Glu-tRNA(Gln). This chain is Aspartyl/glutamyl-tRNA(Asn/Gln) amidotransferase subunit B, found in Clavibacter sepedonicus (Clavibacter michiganensis subsp. sepedonicus).